The sequence spans 501 residues: Fumarate reductase 2 (501 aa).

The transit peptide at methionine 1–serine 32 directs the protein to the mitochondrion. Valine 37–asparagine 51 lines the FAD pocket. Catalysis depends on residues histidine 281 and arginine 304.

The protein belongs to the FAD-dependent oxidoreductase 2 family. FRD/SDH subfamily. It depends on FAD as a cofactor.

It localises to the mitochondrion. It catalyses the reaction succinate + NAD(+) = fumarate + NADH + H(+). In terms of biological role, irreversibly catalyzes the reduction of fumarate to succinate. Together with the second isozyme of soluble fumarate reductase (FRD1), essential for anaerobic growth. Involved in maintaining redox balance during oxygen deficiency conditions. Reduction of fumarate is the main source of succinate during fermentation, and under anaerobic conditions, the formation of succinate is strictly required for the reoxidation of FADH(2). The sequence is that of Fumarate reductase 2 (OSM1) from Saccharomyces cerevisiae (strain ATCC 204508 / S288c) (Baker's yeast).